A 106-amino-acid polypeptide reads, in one-letter code: Cell division topological specificity factor (106 aa).

This sequence belongs to the MinE family.

Prevents the cell division inhibition by proteins MinC and MinD at internal division sites while permitting inhibition at polar sites. This ensures cell division at the proper site by restricting the formation of a division septum at the midpoint of the long axis of the cell. This Prochlorococcus marinus subsp. pastoris (strain CCMP1986 / NIES-2087 / MED4) protein is Cell division topological specificity factor.